A 231-amino-acid polypeptide reads, in one-letter code: NADH-ubiquinone oxidoreductase chain 4 (231 aa).

A run of 6 helical transmembrane segments spans residues 1-21, 34-54, 63-85, 89-111, 128-148, and 169-189; these read PIAG…YGII, MFLP…LTCL, IAYS…TPWG, AMAL…NTTY, ILPM…AIPP, and TIIM…HMFL.

It belongs to the complex I subunit 4 family.

It is found in the mitochondrion membrane. It carries out the reaction a ubiquinone + NADH + 5 H(+)(in) = a ubiquinol + NAD(+) + 4 H(+)(out). In terms of biological role, core subunit of the mitochondrial membrane respiratory chain NADH dehydrogenase (Complex I) that is believed to belong to the minimal assembly required for catalysis. Complex I functions in the transfer of electrons from NADH to the respiratory chain. The immediate electron acceptor for the enzyme is believed to be ubiquinone. In Deinagkistrodon acutus (Hundred-pace snake), this protein is NADH-ubiquinone oxidoreductase chain 4 (MT-ND4).